Reading from the N-terminus, the 138-residue chain is NADH dehydrogenase [ubiquinone] iron-sulfur protein 2, mitochondrial (138 aa).

It belongs to the complex I 49 kDa subunit family. In terms of assembly, core subunit of respiratory chain NADH dehydrogenase (Complex I) which is composed of 45 different subunits. Component of the iron-sulfur (IP) fragment of the enzyme. Interacts with NDUFAF3. Interacts with NDUFAF7. Interacts with CERS2. The cofactor is [4Fe-4S] cluster. In terms of processing, dimethylation at Arg-118 by NDUFAF7 takes place after NDUFS2 assembles into the complex I, leading to stabilize the early intermediate complex.

It is found in the mitochondrion inner membrane. It carries out the reaction a ubiquinone + NADH + 5 H(+)(in) = a ubiquinol + NAD(+) + 4 H(+)(out). Functionally, core subunit of the mitochondrial membrane respiratory chain NADH dehydrogenase (Complex I) which catalyzes electron transfer from NADH through the respiratory chain, using ubiquinone as an electron acceptor. Essential for the catalytic activity and assembly of complex I. Redox-sensitive, critical component of the oxygen-sensing pathway in the pulmonary vasculature which plays a key role in acute pulmonary oxygen-sensing and hypoxic pulmonary vasoconstriction. Plays an important role in carotid body sensing of hypoxia. Essential for glia-like neural stem and progenitor cell proliferation, differentiation and subsequent oligodendrocyte or neuronal maturation. The polypeptide is NADH dehydrogenase [ubiquinone] iron-sulfur protein 2, mitochondrial (Mesocricetus auratus (Golden hamster)).